The following is a 746-amino-acid chain: Polyribonucleotide nucleotidyltransferase (746 aa).

Mg(2+)-binding residues include aspartate 520 and aspartate 526. In terms of domain architecture, KH spans 586 to 648 (PRIITVKVPV…EAARAAVNAI (63 aa)). The region spanning 657–729 (GERYLGTVVK…PRGKLSLVPV (73 aa)) is the S1 motif domain.

Belongs to the polyribonucleotide nucleotidyltransferase family. Mg(2+) is required as a cofactor.

It localises to the cytoplasm. The enzyme catalyses RNA(n+1) + phosphate = RNA(n) + a ribonucleoside 5'-diphosphate. Involved in mRNA degradation. Catalyzes the phosphorolysis of single-stranded polyribonucleotides processively in the 3'- to 5'-direction. This Kineococcus radiotolerans (strain ATCC BAA-149 / DSM 14245 / SRS30216) protein is Polyribonucleotide nucleotidyltransferase.